Consider the following 105-residue polypeptide: MDFDINNLMQQAQAMQEKMKKMQDEAANAEVVGESGAGLVKVTMNGRHDVKGVDIDPSLMSEDKELLEDLLAAAVNDAVRRIEKQQQDSMQNMAGGFPFPPGFKP.

The tract at residues 85–105 (QQQDSMQNMAGGFPFPPGFKP) is disordered.

This sequence belongs to the YbaB/EbfC family. In terms of assembly, homodimer.

The protein resides in the cytoplasm. It is found in the nucleoid. Binds to DNA and alters its conformation. May be involved in regulation of gene expression, nucleoid organization and DNA protection. The sequence is that of Nucleoid-associated protein ABO_1774 from Alcanivorax borkumensis (strain ATCC 700651 / DSM 11573 / NCIMB 13689 / SK2).